Consider the following 294-residue polypeptide: 2-dehydropantoate 2-reductase (294 aa).

Residues 10–15 (GAGALG), Arg34, Lys74, Asn98, and Ala122 contribute to the NADP(+) site. Lys178 serves as the catalytic Proton donor. Residues Lys178, Asn182, Asn186, Asn196, and 243–246 (NRSS) contribute to the substrate site. Glu258 is an NADP(+) binding site.

This sequence belongs to the ketopantoate reductase family.

It is found in the cytoplasm. The catalysed reaction is (R)-pantoate + NAD(+) = 2-dehydropantoate + NADH + H(+). The enzyme catalyses (R)-pantoate + NADP(+) = 2-dehydropantoate + NADPH + H(+). The protein operates within cofactor biosynthesis; coenzyme A biosynthesis. Catalyzes the NAD(P)H-dependent reduction of ketopantoate into pantoic acid. This is 2-dehydropantoate 2-reductase from Archaeoglobus fulgidus (strain ATCC 49558 / DSM 4304 / JCM 9628 / NBRC 100126 / VC-16).